The primary structure comprises 809 residues: Origin of replication complex subunit 1A (809 aa).

A compositionally biased stretch (low complexity) spans 1–47; it reads MASSLSSKAKTFKSPTKTPTKMYRKSYLSPSSTSLTPPQTPETLTPL. The segment at 1 to 69 is disordered; the sequence is MASSLSSKAK…LGNDPIDLPG (69 aa). Positions 160–185 are histone H3 binding; sequence DPEIEDCQICFKSHTNTIMIECDDCL. The PHD-type zinc-finger motif lies at 163–213; that stretch reads IEDCQICFKSHTNTIMIECDDCLGGFHLNCLKPPLKEVPEGDWICQFCEVK. Zn(2+)-binding residues include Cys-166, Cys-169, Cys-181, Cys-184, His-189, and Cys-192. A histone H3 binding region spans residues 201-205; that stretch reads PEGDW. Zn(2+) contacts are provided by Cys-207 and Cys-210. A BAH domain is found at 223–341; sequence PKPPEGKKLA…VHWGSFKRVA (119 aa). The tract at residues 316 to 321 is histone H3 binding; the sequence is ASNDGD. The interval 431–799 is necessary and sufficient for ORC complex assembly; it reads PKSLPCRSKE…DDVAFALKDN (369 aa). ATP is bound by residues 466 to 473 and 466 to 474; these read GVPGTGKT and GVPGTGKTI. Mg(2+)-binding residues include Asp-556 and Glu-557. 3 residues coordinate ATP: Glu-557, Asn-590, and Arg-655.

Belongs to the ORC1 family. Component of the origin recognition complex (ORC) composed of at least ORC1 (ORC1A or ORC1B), ORC2, ORC3, ORC4, ORC5 and ORC6. ORC is regulated in a cell-cycle and development dependent manner. It is sequentially assembled at the exit from anaphase of mitosis and disassembled as cells enter S phase. Interacts directly with ORC2, ORC3, ORC4 and ORC5. Binds mostly unmodified histone H3, and, with lower efficiency, H3K4me1 H3K4me2 and H3K4me3. As to expression, follow a cell-cycle regulation with a peak at the G1/S-phase. Mostly expressed in siliques, flowers and flower buds, and, to a lower extent, in roots, leaves and stems.

The protein localises to the nucleus. In terms of biological role, essential protein. Component of the origin recognition complex (ORC) that binds origins of replication. It has a role in both chromosomal replication and mating type transcriptional silencing. Binds to the ARS consensus sequence (ACS) of origins of replication. H3K4me3 effector that positively regulates the transcription of a subset of genes. This is Origin of replication complex subunit 1A from Arabidopsis thaliana (Mouse-ear cress).